The primary structure comprises 370 residues: Ubiquitin carboxyl-terminal hydrolase 12-B (370 aa).

A USP domain is found at 39–369; that stretch reads FGLVNFGNTC…SGYILFYQSR (331 aa). Residue C48 is the Nucleophile of the active site. Residues 145–168 are disordered; it reads KQEKQNGRIPNGNIDNENNNNTPD. The span at 155–165 shows a compositional bias: low complexity; that stretch reads NGNIDNENNNN. The Zn(2+) site is built by C186, C189, C233, and C236. H317 functions as the Proton acceptor in the catalytic mechanism.

This sequence belongs to the peptidase C19 family. USP12/USP46 subfamily. In terms of assembly, interacts with WDR48.

It catalyses the reaction Thiol-dependent hydrolysis of ester, thioester, amide, peptide and isopeptide bonds formed by the C-terminal Gly of ubiquitin (a 76-residue protein attached to proteins as an intracellular targeting signal).. Its function is as follows. Deubiquitinating enzyme. Has almost no deubiquitinating activity by itself and requires the interaction with wdr48 to have a high activity. The polypeptide is Ubiquitin carboxyl-terminal hydrolase 12-B (usp12-b) (Xenopus laevis (African clawed frog)).